The sequence spans 59 residues: uncharacterized protein (59 aa).

The next 2 membrane-spanning stretches (helical) occupy residues 1–21 (MNMYWFLGALLYFLIGTYIFI) and 30–50 (GSWILLALAAPLIIAGYPYFY).

The protein localises to the cell membrane. This is an uncharacterized protein from Bacillus subtilis (strain 168).